A 405-amino-acid chain; its full sequence is Double C2-like domain-containing protein alpha (405 aa).

Positions 1-94 (MRGRRGDRMT…DSYDSDDTTA (94 aa)) are interaction with UNC13D and DYNLT1. The tract at residues 34–54 (DYFPRRGPGPEGGGGGGGTGC) is disordered. Positions 42 to 54 (GPEGGGGGGGTGC) are enriched in gly residues. C2 domains are found at residues 94-216 (ALGT…HFNI) and 256-389 (ERGR…ERWH). Residues Asp-125, Asp-131, Asp-186, Asp-188, Asp-287, Asp-293, Asp-347, Asp-349, and Asp-355 each coordinate Ca(2+). Positions 220-405 (RQVPLPSPSS…PPAAGAYPLA (186 aa)) are interaction with UNC13D.

In terms of assembly, interacts (via N-terminus) with UNC13A. Interacts with cytoplasmic dynein light chain DYNLT1. Interacts with UNC13D. It depends on Ca(2+) as a cofactor. In terms of tissue distribution, brain and mast cells.

It is found in the cytoplasmic vesicle. Its subcellular location is the secretory vesicle. The protein resides in the synaptic vesicle membrane. It localises to the synapse. The protein localises to the synaptosome. It is found in the lysosome. In terms of biological role, calcium sensor which most probably regulates fusion of vesicles with membranes. Binds calcium and phospholipids. May be involved in calcium dependent neurotransmitter release through the interaction with UNC13A. May be involved in calcium-dependent spontaneous release of neurotransmitter in absence of action potentials in neuronal cells. Regulates Ca(2+)-dependent secretory lysosome exocytosis in mast cells. This Mus musculus (Mouse) protein is Double C2-like domain-containing protein alpha (Doc2a).